A 390-amino-acid polypeptide reads, in one-letter code: Cystathionine beta-lyase (390 aa).

An N6-(pyridoxal phosphate)lysine modification is found at lysine 202.

It belongs to the trans-sulfuration enzymes family. Pyridoxal 5'-phosphate is required as a cofactor.

It is found in the cytoplasm. The protein resides in the nucleus. The enzyme catalyses L,L-cystathionine + H2O = L-homocysteine + pyruvate + NH4(+). It catalyses the reaction an S-substituted L-cysteine + H2O = a thiol + pyruvate + NH4(+). It functions in the pathway amino-acid biosynthesis; L-methionine biosynthesis via de novo pathway; L-homocysteine from L-cystathionine: step 1/1. This chain is Cystathionine beta-lyase (str3), found in Schizosaccharomyces pombe (strain 972 / ATCC 24843) (Fission yeast).